Reading from the N-terminus, the 340-residue chain is 4-hydroxythreonine-4-phosphate dehydrogenase (340 aa).

2 residues coordinate substrate: His141 and Thr142. The a divalent metal cation site is built by His177, His222, and His277. Substrate is bound by residues Lys285, Asn294, and Arg303.

The protein belongs to the PdxA family. In terms of assembly, homodimer. It depends on Zn(2+) as a cofactor. Requires Mg(2+) as cofactor. Co(2+) serves as cofactor.

Its subcellular location is the cytoplasm. The catalysed reaction is 4-(phosphooxy)-L-threonine + NAD(+) = 3-amino-2-oxopropyl phosphate + CO2 + NADH. It functions in the pathway cofactor biosynthesis; pyridoxine 5'-phosphate biosynthesis; pyridoxine 5'-phosphate from D-erythrose 4-phosphate: step 4/5. Catalyzes the NAD(P)-dependent oxidation of 4-(phosphooxy)-L-threonine (HTP) into 2-amino-3-oxo-4-(phosphooxy)butyric acid which spontaneously decarboxylates to form 3-amino-2-oxopropyl phosphate (AHAP). This Maricaulis maris (strain MCS10) (Caulobacter maris) protein is 4-hydroxythreonine-4-phosphate dehydrogenase.